The primary structure comprises 256 residues: Probable aquaporin TIP4-2 (256 aa).

5 helical membrane passes run alanine 25 to isoleucine 45, alanine 59 to phenylalanine 79, leucine 86 to tyrosine 108, glycine 146 to leucine 166, and proline 178 to alanine 198. The NPA 1 signature appears at asparagine 87–alanine 89. The NPA 2 motif lies at asparagine 201 to alanine 203. A helical transmembrane segment spans residues valine 220–phenylalanine 240.

The protein belongs to the MIP/aquaporin (TC 1.A.8) family. TIP (TC 1.A.8.10) subfamily. Expressed in roots, leaves and anthers.

It localises to the vacuole membrane. Functionally, aquaporins facilitate the transport of water and small neutral solutes across cell membranes. May be involved in transport from the vacuolar compartment to the cytoplasm. The protein is Probable aquaporin TIP4-2 (TIP4-2) of Oryza sativa subsp. japonica (Rice).